The following is a 187-amino-acid chain: UPF0340 protein SPD_0576 (187 aa).

This sequence belongs to the UPF0340 family.

The sequence is that of UPF0340 protein SPD_0576 from Streptococcus pneumoniae serotype 2 (strain D39 / NCTC 7466).